Here is a 169-residue protein sequence, read N- to C-terminus: Lipoprotein signal peptidase (169 aa).

4 helical membrane passes run 4–24 (PICS…IVDL), 42–62 (LIPF…SFLA), 70–90 (WFFA…MYRS), and 102–122 (ALII…GAVI). Residues Asp123 and Asp141 contribute to the active site. The chain crosses the membrane as a helical span at residues 137 to 157 (FNIADTAICIGAALVIFEGFI).

It belongs to the peptidase A8 family.

Its subcellular location is the cell inner membrane. The catalysed reaction is Release of signal peptides from bacterial membrane prolipoproteins. Hydrolyzes -Xaa-Yaa-Zaa-|-(S,diacylglyceryl)Cys-, in which Xaa is hydrophobic (preferably Leu), and Yaa (Ala or Ser) and Zaa (Gly or Ala) have small, neutral side chains.. It participates in protein modification; lipoprotein biosynthesis (signal peptide cleavage). This protein specifically catalyzes the removal of signal peptides from prolipoproteins. In Yersinia enterocolitica serotype O:8 / biotype 1B (strain NCTC 13174 / 8081), this protein is Lipoprotein signal peptidase.